The sequence spans 353 residues: 4-hydroxy-3-methylbut-2-en-1-yl diphosphate synthase (flavodoxin) (353 aa).

Residues cysteine 263, cysteine 266, cysteine 298, and glutamate 305 each coordinate [4Fe-4S] cluster.

The protein belongs to the IspG family. [4Fe-4S] cluster is required as a cofactor.

The catalysed reaction is (2E)-4-hydroxy-3-methylbut-2-enyl diphosphate + oxidized [flavodoxin] + H2O + 2 H(+) = 2-C-methyl-D-erythritol 2,4-cyclic diphosphate + reduced [flavodoxin]. The protein operates within isoprenoid biosynthesis; isopentenyl diphosphate biosynthesis via DXP pathway; isopentenyl diphosphate from 1-deoxy-D-xylulose 5-phosphate: step 5/6. Converts 2C-methyl-D-erythritol 2,4-cyclodiphosphate (ME-2,4cPP) into 1-hydroxy-2-methyl-2-(E)-butenyl 4-diphosphate. This chain is 4-hydroxy-3-methylbut-2-en-1-yl diphosphate synthase (flavodoxin), found in Geobacter sulfurreducens (strain ATCC 51573 / DSM 12127 / PCA).